A 333-amino-acid chain; its full sequence is 4-hydroxyproline epimerase (333 aa).

Cysteine 90 functions as the Proton acceptor in the catalytic mechanism. Residues glycine 91–histidine 92 and aspartate 249 each bind substrate. Catalysis depends on cysteine 253, which acts as the Proton donor. Substrate is bound at residue glycine 254–threonine 255.

The protein belongs to the proline racemase family. In terms of assembly, homodimer.

It catalyses the reaction trans-4-hydroxy-L-proline = cis-4-hydroxy-D-proline. Its function is as follows. Allows intracellular utilization of 4-hydroxyproline, one of the major constituents of host collagen, by converting 4-hydroxy-L-proline to 4-hydroxy-D-proline, which can be further metabolized by intracellular 4-hydroxy-D-proline oxidases. Strong B-cell mitogen. Plays an important role in the regulation of intra- and extracellular amino acid pools, allowing the bacterium to profit from host precursors and enzymatic pathways. This chain is 4-hydroxyproline epimerase, found in Brucella abortus (strain S19).